A 314-amino-acid chain; its full sequence is MSSSDLVAASIQGNLDEQISQLMQCKPLSEPDVRALCEKAKEILAEESNVQPVKSPVTICGDIHGQFHDLAELFRIGGQCPDTNYLFMGDYVDRGYYSVETVTLLVALKVRYPQRLTILRGNHESRQITQVYGFYDECLRKYGNANVWKTFTDLFDYFPLTALVESEIFCLHGGLSPSIETLDNVRSFDRVQEVPHEGAMCDLLWSDPDDCCGWGMSPRGAGYTFGQDISEQFHQTNNLKLIARAHQLVMEGYNWSHEQKVVTIFSAPNYCYRCGNMASILEVDDCRGHTFIQFDPAPRRGEPDVTRRTPDYFL.

The Mn(2+) site is built by aspartate 62, histidine 64, aspartate 90, and asparagine 122. Residue histidine 123 is the Proton donor of the active site. Positions 172 and 246 each coordinate Mn(2+).

The protein belongs to the PPP phosphatase family. PP-2A subfamily. Mn(2+) serves as cofactor.

The protein localises to the cytoplasm. The enzyme catalyses O-phospho-L-seryl-[protein] + H2O = L-seryl-[protein] + phosphate. It carries out the reaction O-phospho-L-threonyl-[protein] + H2O = L-threonyl-[protein] + phosphate. The protein is Serine/threonine-protein phosphatase PP2A-5 catalytic subunit (NPP5) of Nicotiana tabacum (Common tobacco).